We begin with the raw amino-acid sequence, 132 residues long: Small ribosomal subunit protein uS9 (132 aa).

The segment at 104–132 is disordered; that stretch reads GYLTRDPRMKERKKYGLRKARRAPQFSKR. Residues 113–132 show a composition bias toward basic residues; sequence KERKKYGLRKARRAPQFSKR.

It belongs to the universal ribosomal protein uS9 family.

The polypeptide is Small ribosomal subunit protein uS9 (Natranaerobius thermophilus (strain ATCC BAA-1301 / DSM 18059 / JW/NM-WN-LF)).